The sequence spans 180 residues: Colicin-E5 (180 aa).

2 disordered regions span residues alanine 24–glycine 143 and valine 155–glutamine 180. The segment covering glutamate 54–lysine 76 has biased composition (basic and acidic residues). The tract at residues leucine 74–glutamine 180 is nuclease. Over residues asparagine 106 to serine 116 the composition is skewed to polar residues. Positions aspartate 160 to arginine 171 are enriched in basic and acidic residues.

Belongs to the colicin/pyosin nuclease family.

In terms of biological role, colicins are polypeptide toxins produced by and active against E.coli and closely related bacteria. This colicin is an endonuclease. This is Colicin-E5 (col) from Escherichia coli.